The following is a 1009-amino-acid chain: Regulator of telomere elongation helicase 1 homolog (1009 aa).

The 316-residue stretch at Ala-7–Ala-322 folds into the Helicase ATP-binding domain. Ser-42 to Thr-49 is an ATP binding site. The [4Fe-4S] cluster site is built by Cys-146, Cys-164, Cys-173, and Cys-209. The short motif at Asp-252–His-255 is the DEAH box element.

The protein belongs to the helicase family. RAD3/XPD subfamily.

The protein resides in the nucleus. It catalyses the reaction ATP + H2O = ADP + phosphate + H(+). Its function is as follows. A probable ATP-dependent DNA helicase implicated in DNA repair and the maintenance of genomic stability. Acts as an anti-recombinase to counteract toxic recombination and limit crossover during meiosis. Regulates meiotic recombination and crossover homeostasis by physically dissociating strand invasion events and thereby promotes noncrossover repair by meiotic synthesis dependent strand annealing (SDSA) as well as disassembly of D loop recombination intermediates. The polypeptide is Regulator of telomere elongation helicase 1 homolog (Drosophila persimilis (Fruit fly)).